We begin with the raw amino-acid sequence, 481 residues long: MEIKMKNNFETVIGIEVHVVLSSKTKMFSSSKSSHTDPKNTNISPIDLGHPGTMPLPNKRCIEKAIVLAKALDMEIEKNISFDRKNYFYQDLPKGFQITQQFHPIGKNGKIYLDENNFVDIERIHLEEDTAKQTKEDDGTILLDYNRSGIPLIEIVTKPCIKSSTEAGLFLKKLRRILTFNDISDAKMEEGSLRVDVNISVKPIGSKEFGTRVEIKNINSINNVEKAIEYESNLQAEQILKQEEVLMATKRFNDKTLTTEFMRLKTTNVDYHYMVEPNIFVRKISDDFITDVIKNNYTDIKSIEADLLKNNVSQEFINLLMDDYELFQKFKFINDEIKDCNEVIKWLCVEFVGSLNKVNLKLKDATDFQLNQLLKMMKYLLKDASINAKQGKEIVKLLIETNKDIDTLIEENNFKQITDKNVLRPILEKYVEANKPMLDQYDSRPERVEKFFIGMVMKDTNGQANPNVVTEIFNEILKLNK.

The disordered stretch occupies residues 29 to 50 (SSSKSSHTDPKNTNISPIDLGH).

Belongs to the GatB/GatE family. GatB subfamily. In terms of assembly, heterotrimer of A, B and C subunits.

It catalyses the reaction L-glutamyl-tRNA(Gln) + L-glutamine + ATP + H2O = L-glutaminyl-tRNA(Gln) + L-glutamate + ADP + phosphate + H(+). The catalysed reaction is L-aspartyl-tRNA(Asn) + L-glutamine + ATP + H2O = L-asparaginyl-tRNA(Asn) + L-glutamate + ADP + phosphate + 2 H(+). Its function is as follows. Allows the formation of correctly charged Asn-tRNA(Asn) or Gln-tRNA(Gln) through the transamidation of misacylated Asp-tRNA(Asn) or Glu-tRNA(Gln) in organisms which lack either or both of asparaginyl-tRNA or glutaminyl-tRNA synthetases. The reaction takes place in the presence of glutamine and ATP through an activated phospho-Asp-tRNA(Asn) or phospho-Glu-tRNA(Gln). The sequence is that of Aspartyl/glutamyl-tRNA(Asn/Gln) amidotransferase subunit B from Malacoplasma penetrans (strain HF-2) (Mycoplasma penetrans).